Here is a 357-residue protein sequence, read N- to C-terminus: UDP-N-acetylglucosamine--N-acetylmuramyl-(pentapeptide) pyrophosphoryl-undecaprenol N-acetylglucosamine transferase (357 aa).

UDP-N-acetyl-alpha-D-glucosamine is bound by residues 15–17 (TGG), N124, R165, S194, and Q288.

The protein belongs to the glycosyltransferase 28 family. MurG subfamily.

The protein localises to the cell inner membrane. The enzyme catalyses di-trans,octa-cis-undecaprenyl diphospho-N-acetyl-alpha-D-muramoyl-L-alanyl-D-glutamyl-meso-2,6-diaminopimeloyl-D-alanyl-D-alanine + UDP-N-acetyl-alpha-D-glucosamine = di-trans,octa-cis-undecaprenyl diphospho-[N-acetyl-alpha-D-glucosaminyl-(1-&gt;4)]-N-acetyl-alpha-D-muramoyl-L-alanyl-D-glutamyl-meso-2,6-diaminopimeloyl-D-alanyl-D-alanine + UDP + H(+). It participates in cell wall biogenesis; peptidoglycan biosynthesis. Functionally, cell wall formation. Catalyzes the transfer of a GlcNAc subunit on undecaprenyl-pyrophosphoryl-MurNAc-pentapeptide (lipid intermediate I) to form undecaprenyl-pyrophosphoryl-MurNAc-(pentapeptide)GlcNAc (lipid intermediate II). In Trichormus variabilis (strain ATCC 29413 / PCC 7937) (Anabaena variabilis), this protein is UDP-N-acetylglucosamine--N-acetylmuramyl-(pentapeptide) pyrophosphoryl-undecaprenol N-acetylglucosamine transferase.